The following is a 190-amino-acid chain: Potassium-transporting ATPase KdpC subunit (190 aa).

The helical transmembrane segment at 10–30 (TFLFLLLITGGVYPLLTTALG) threads the bilayer.

The protein belongs to the KdpC family. The system is composed of three essential subunits: KdpA, KdpB and KdpC.

Its subcellular location is the cell inner membrane. Functionally, part of the high-affinity ATP-driven potassium transport (or Kdp) system, which catalyzes the hydrolysis of ATP coupled with the electrogenic transport of potassium into the cytoplasm. This subunit acts as a catalytic chaperone that increases the ATP-binding affinity of the ATP-hydrolyzing subunit KdpB by the formation of a transient KdpB/KdpC/ATP ternary complex. In Escherichia fergusonii (strain ATCC 35469 / DSM 13698 / CCUG 18766 / IAM 14443 / JCM 21226 / LMG 7866 / NBRC 102419 / NCTC 12128 / CDC 0568-73), this protein is Potassium-transporting ATPase KdpC subunit.